The chain runs to 219 residues: Claudin-6 (219 aa).

Residues 1 to 7 (MASTGLQ) are Cytoplasmic-facing. Residues 8–28 (ILGIVLTLLGWVNALVSCALP) traverse the membrane as a helical segment. Residues 29-81 (MWKVTAFIGNSIVVAQMVWEGLWMSCVVQSTGQMQCKVYDSLLALPQDLQAAR) are Extracellular-facing. Residues 82-102 (ALCVVTLLIVLLGLLVYLAGA) form a helical membrane-spanning segment. Residues 103–116 (KCTTCVEDRNSKSR) are Cytoplasmic-facing. The chain crosses the membrane as a helical span at residues 117–137 (LVLISGIIFVISGVLTLIPVC). Residues 138-163 (WTAHSIIQDFYNPLVADAQKRELGAS) are Extracellular-facing. Residues 164-184 (LYLGWAASGLLLLGGGLLCCA) traverse the membrane as a helical segment. Residues 185–219 (CSSGGTQGPRHYMACYSTSVPHSRGPSEYPTKNYV) are Cytoplasmic-facing. A phosphoserine mark is found at serine 201, serine 203, serine 207, and serine 211. The tract at residues 218-219 (YV) is interactions with TJP1, TJP2 and TJP3.

It belongs to the claudin family. In terms of assembly, directly interacts with TJP1/ZO-1, TJP2/ZO-2 and TJP3/ZO-3. Interacts with CLDN1, CD81 and OCLN. In terms of tissue distribution, expressed mostly in embryonic tissues.

Its subcellular location is the cell junction. The protein localises to the tight junction. It localises to the cell membrane. In terms of biological role, plays a major role in tight junction-specific obliteration of the intercellular space, through calcium-independent cell-adhesion activity. This is Claudin-6 (Cldn6) from Mus musculus (Mouse).